Reading from the N-terminus, the 312-residue chain is Glyoxylate/hydroxypyruvate reductase A (312 aa).

Arginine 227 is an active-site residue. Histidine 275 (proton donor) is an active-site residue.

It belongs to the D-isomer specific 2-hydroxyacid dehydrogenase family. GhrA subfamily.

The protein resides in the cytoplasm. The enzyme catalyses glycolate + NADP(+) = glyoxylate + NADPH + H(+). The catalysed reaction is (R)-glycerate + NAD(+) = 3-hydroxypyruvate + NADH + H(+). It catalyses the reaction (R)-glycerate + NADP(+) = 3-hydroxypyruvate + NADPH + H(+). Its function is as follows. Catalyzes the NADPH-dependent reduction of glyoxylate and hydroxypyruvate into glycolate and glycerate, respectively. This is Glyoxylate/hydroxypyruvate reductase A from Salmonella enteritidis PT4 (strain P125109).